The chain runs to 537 residues: Zinc finger protein 703 (537 aa).

Disordered stretches follow at residues 1 to 38 (MNCS…LRQA), 90 to 254 (SQIG…VAPV), and 300 to 323 (VGNQ…LTGA). Polar residues predominate over residues 101-111 (SKLNSVTSSGL). Residues 149 to 158 (GSSSGGAADK) show a composition bias toward low complexity. The segment covering 176–185 (SPSSRVSSPG) has biased composition (polar residues). Positions 188–203 (CDSKNNESQEKKEPEA) are enriched in basic and acidic residues. Over residues 205–220 (KANSETSQVNPTLTRA) the composition is skewed to polar residues. Over residues 221 to 232 (STSNSSAESSQS) the composition is skewed to low complexity. The segment at 409 to 437 (HICNWVSASGPCDKRFSTSEELLAHLRTH) adopts a C2H2-type zinc-finger fold.

It belongs to the Elbow/Noc family.

The protein localises to the nucleus. It localises to the cytoplasm. Its function is as follows. Transcriptional corepressor which does not bind directly to DNA and may regulate transcription through recruitment of histone deacetylases to gene promoters. Regulates cell adhesion, migration and proliferation. Involved in specification of the lateral neural plate border (NPB). May be required for segmental gene expression during hindbrain development. The chain is Zinc finger protein 703 (znf703) from Xenopus tropicalis (Western clawed frog).